The sequence spans 527 residues: Proline--tRNA ligase (527 aa).

It belongs to the class-II aminoacyl-tRNA synthetase family. ProS type 3 subfamily. Homodimer.

Its subcellular location is the cytoplasm. It carries out the reaction tRNA(Pro) + L-proline + ATP = L-prolyl-tRNA(Pro) + AMP + diphosphate. Catalyzes the attachment of proline to tRNA(Pro) in a two-step reaction: proline is first activated by ATP to form Pro-AMP and then transferred to the acceptor end of tRNA(Pro). This is Proline--tRNA ligase from Sphingopyxis alaskensis (strain DSM 13593 / LMG 18877 / RB2256) (Sphingomonas alaskensis).